A 1076-amino-acid chain; its full sequence is DNA-directed RNA polymerase subunit beta (1076 aa).

Belongs to the RNA polymerase beta chain family. In plastids the minimal PEP RNA polymerase catalytic core is composed of four subunits: alpha, beta, beta', and beta''. When a (nuclear-encoded) sigma factor is associated with the core the holoenzyme is formed, which can initiate transcription.

It is found in the plastid. It localises to the chloroplast. The enzyme catalyses RNA(n) + a ribonucleoside 5'-triphosphate = RNA(n+1) + diphosphate. Its function is as follows. DNA-dependent RNA polymerase catalyzes the transcription of DNA into RNA using the four ribonucleoside triphosphates as substrates. This chain is DNA-directed RNA polymerase subunit beta, found in Lolium perenne (Perennial ryegrass).